The chain runs to 318 residues: Ribosomal RNA small subunit methyltransferase H (318 aa).

S-adenosyl-L-methionine is bound by residues 33–35 (GGH), aspartate 53, phenylalanine 80, aspartate 101, and glutamine 108.

This sequence belongs to the methyltransferase superfamily. RsmH family.

It is found in the cytoplasm. The enzyme catalyses cytidine(1402) in 16S rRNA + S-adenosyl-L-methionine = N(4)-methylcytidine(1402) in 16S rRNA + S-adenosyl-L-homocysteine + H(+). Specifically methylates the N4 position of cytidine in position 1402 (C1402) of 16S rRNA. This Symbiobacterium thermophilum (strain DSM 24528 / JCM 14929 / IAM 14863 / T) protein is Ribosomal RNA small subunit methyltransferase H.